A 763-amino-acid polypeptide reads, in one-letter code: Translation initiation factor IF-2, chloroplastic (763 aa).

Disordered regions lie at residues 1-22 (MFLN…NNSS), 52-122 (IDKS…SNSA), and 149-168 (NNKI…DQSI). The span at 13–22 (SSYSTNNNSS) shows a compositional bias: low complexity. Basic and acidic residues predominate over residues 73–92 (RIDKKNKNFNKAHDLLDNKK). Residues 93 to 104 (NKNRQRKKIKNK) are compositionally biased toward basic residues. A compositionally biased stretch (polar residues) spans 151-168 (KIPQQKKQQVASSIDQSI). Residues 261–429 (NRPPVVTILG…ILLLAELENL (169 aa)) form the tr-type G domain. GTP contacts are provided by residues 270–277 (GHVDHGKT), 316–320 (DTPGH), and 370–373 (SKID).

The protein belongs to the TRAFAC class translation factor GTPase superfamily. Classic translation factor GTPase family. IF-2 subfamily.

Its subcellular location is the plastid. The protein resides in the chloroplast. Functionally, one of the essential components for the initiation of protein synthesis. Protects formylmethionyl-tRNA from spontaneous hydrolysis and promotes its binding to the 30S ribosomal subunits. Also involved in the hydrolysis of GTP during the formation of the 70S ribosomal complex. This Porphyra purpurea (Red seaweed) protein is Translation initiation factor IF-2, chloroplastic (infB).